We begin with the raw amino-acid sequence, 303 residues long: UDP-3-O-acyl-N-acetylglucosamine deacetylase (303 aa).

Zn(2+)-binding residues include histidine 78, histidine 237, and aspartate 241. The Proton donor role is filled by histidine 264.

The protein belongs to the LpxC family. Requires Zn(2+) as cofactor.

It catalyses the reaction a UDP-3-O-[(3R)-3-hydroxyacyl]-N-acetyl-alpha-D-glucosamine + H2O = a UDP-3-O-[(3R)-3-hydroxyacyl]-alpha-D-glucosamine + acetate. The protein operates within glycolipid biosynthesis; lipid IV(A) biosynthesis; lipid IV(A) from (3R)-3-hydroxytetradecanoyl-[acyl-carrier-protein] and UDP-N-acetyl-alpha-D-glucosamine: step 2/6. Catalyzes the hydrolysis of UDP-3-O-myristoyl-N-acetylglucosamine to form UDP-3-O-myristoylglucosamine and acetate, the committed step in lipid A biosynthesis. The polypeptide is UDP-3-O-acyl-N-acetylglucosamine deacetylase (Chromohalobacter salexigens (strain ATCC BAA-138 / DSM 3043 / CIP 106854 / NCIMB 13768 / 1H11)).